The primary structure comprises 80 residues: SPbeta prophage-derived thioredoxin-like protein YosR (80 aa).

The region spanning M1–R80 is the Thioredoxin domain. C11 and C14 are disulfide-bonded.

Belongs to the thioredoxin family.

The sequence is that of SPbeta prophage-derived thioredoxin-like protein YosR (yosR) from Bacillus subtilis (strain 168).